The primary structure comprises 212 residues: Thymidylate kinase (212 aa).

An ATP-binding site is contributed by 10–17 (GLEGAGKT).

It belongs to the thymidylate kinase family.

It carries out the reaction dTMP + ATP = dTDP + ADP. Its function is as follows. Phosphorylation of dTMP to form dTDP in both de novo and salvage pathways of dTTP synthesis. The chain is Thymidylate kinase from Cronobacter sakazakii (strain ATCC BAA-894) (Enterobacter sakazakii).